The following is a 267-amino-acid chain: MTVFESLMNKLTEKGALHFSLLDPDKVTMDKFIELAKGAEKAGSDALMIGGSYGVNEGTLDNYIDAVKQEVKLPIILFPGSVAGLSRRADAVLFLSVLNSTDPYYIIGAQVQAAVLMAKHYSNLESIPMAYIIVGEGGAVGFASYAKPIPFHMEDVIVAYALAAYYMGFSAIYLEAGSGAREPVPSSVVAKVKRAVRNKILMVGGGIKSPEAAYSIALAGADVIITGTVIEESPAVVLKDIVDAVHRGGLRRLSNSNENANAWVNDK.

Residues aspartate 23 and serine 52 each contribute to the Mg(2+) site. Sn-glycerol 1-phosphate is bound by residues 173–179 (YLEAGSG), 205–206 (GG), and 227–228 (GT).

Belongs to the GGGP/HepGP synthase family. Group II subfamily. The cofactor is Mg(2+).

The protein resides in the cytoplasm. The catalysed reaction is sn-glycerol 1-phosphate + (2E,6E,10E)-geranylgeranyl diphosphate = sn-3-O-(geranylgeranyl)glycerol 1-phosphate + diphosphate. The protein operates within membrane lipid metabolism; glycerophospholipid metabolism. In terms of biological role, prenyltransferase that catalyzes the transfer of the geranylgeranyl moiety of geranylgeranyl diphosphate (GGPP) to the C3 hydroxyl of sn-glycerol-1-phosphate (G1P). This reaction is the first ether-bond-formation step in the biosynthesis of archaeal membrane lipids. This Caldivirga maquilingensis (strain ATCC 700844 / DSM 13496 / JCM 10307 / IC-167) protein is Geranylgeranylglyceryl phosphate synthase.